A 356-amino-acid polypeptide reads, in one-letter code: Mitogen-activated protein kinase PMK1 (356 aa).

One can recognise a Protein kinase domain in the interval tyrosine 24–leucine 312. Residues valine 30–valine 38 and lysine 53 contribute to the ATP site.

This sequence belongs to the protein kinase superfamily. CMGC Ser/Thr protein kinase family. MAP kinase subfamily. It depends on Mg(2+) as a cofactor. Post-translationally, phosphorylated by MST7.

It carries out the reaction L-seryl-[protein] + ATP = O-phospho-L-seryl-[protein] + ADP + H(+). The enzyme catalyses L-threonyl-[protein] + ATP = O-phospho-L-threonyl-[protein] + ADP + H(+). Mitogen-activated protein kinase; part of the MST11-MST7-PMK1 MAP kinase (MAPK) cascade that is essential for appressorium formation, penetration and invasive growth. Central regulator of appressorium development that acts downstream of the cAMP signal. The MST11-MST7-PMK1 MAP kinase cascade transduces signals from the cell surface sensors MDB2 and SHO1 that recognize various surface signals such as surface hydrophobicity, cutin monomers, and rice leaf waxes. Regulates expression of secreted fungal effector proteins implicated of host immune defenses, preventing reactive oxygen species generation and excessive callose deposition at plasmodesmata. Furthermore, controls the hyphal constriction required for fungal growth from one rice cell to the neighboring cell, enabling host tissue colonization and blast disease. Targets downstream of the PMK1-MAPK pathway include transcription factor MST12 and pathogenicity-related genes GAS1 and GAS2, both of which are expressed during appressorium formation, even if regulation of MST12 is not associated with expression of GAS1 or GAS2. The sequence is that of Mitogen-activated protein kinase PMK1 from Pyricularia oryzae (Rice blast fungus).